The sequence spans 35 residues: Photosystem II reaction center protein Psb30 (35 aa).

A helical membrane pass occupies residues 6–26 (VIVQLVFLALIITTGPVIIVY).

This sequence belongs to the Psb30/Ycf12 family. As to quaternary structure, PSII is composed of 1 copy each of membrane proteins PsbA, PsbB, PsbC, PsbD, PsbE, PsbF, PsbH, PsbI, PsbJ, PsbK, PsbL, PsbM, PsbT, PsbY, PsbZ, Psb30/Ycf12, peripheral proteins of the oxygen-evolving complex and a large number of cofactors. It forms dimeric complexes.

Its subcellular location is the plastid. It localises to the chloroplast thylakoid membrane. In terms of biological role, a core subunit of photosystem II (PSII), probably helps stabilize the reaction center. This Cyanidium caldarium (Red alga) protein is Photosystem II reaction center protein Psb30.